The following is a 295-amino-acid chain: Bifunctional protein FolD (295 aa).

NADP(+)-binding positions include 166 to 168 (GRS), Ser-191, and Ile-232.

The protein belongs to the tetrahydrofolate dehydrogenase/cyclohydrolase family. In terms of assembly, homodimer.

It carries out the reaction (6R)-5,10-methylene-5,6,7,8-tetrahydrofolate + NADP(+) = (6R)-5,10-methenyltetrahydrofolate + NADPH. The enzyme catalyses (6R)-5,10-methenyltetrahydrofolate + H2O = (6R)-10-formyltetrahydrofolate + H(+). It functions in the pathway one-carbon metabolism; tetrahydrofolate interconversion. Functionally, catalyzes the oxidation of 5,10-methylenetetrahydrofolate to 5,10-methenyltetrahydrofolate and then the hydrolysis of 5,10-methenyltetrahydrofolate to 10-formyltetrahydrofolate. The sequence is that of Bifunctional protein FolD from Wolbachia sp. subsp. Brugia malayi (strain TRS).